Here is a 349-residue protein sequence, read N- to C-terminus: Ion-translocating oxidoreductase complex subunit D (349 aa).

Helical transmembrane passes span 36–56 (CAFF…VALS), 77–99 (SAML…WMIV), and 124–144 (AMAA…SWIA). Thr-185 is subject to FMN phosphoryl threonine. 5 consecutive transmembrane segments (helical) span residues 212 to 232 (GTGV…LVLL), 239 to 259 (WHIS…GFLL), 265 to 285 (ASPL…FIAT), 291 to 311 (ATSP…VYVI), and 315 to 335 (GGYP…APFI).

This sequence belongs to the NqrB/RnfD family. As to quaternary structure, the complex is composed of six subunits: RnfA, RnfB, RnfC, RnfD, RnfE and RnfG. The cofactor is FMN.

It localises to the cell inner membrane. Part of a membrane-bound complex that couples electron transfer with translocation of ions across the membrane. This chain is Ion-translocating oxidoreductase complex subunit D, found in Shewanella sp. (strain MR-4).